We begin with the raw amino-acid sequence, 371 residues long: Sensor histidine kinase YvfT (371 aa).

Residues 1–10 lie on the Extracellular side of the membrane; it reads MKKAISIFPK. The helical transmembrane segment at 11–31 threads the bilayer; it reads EFGFFPYIFLVYTIMPFLSLL. At 32–38 the chain is on the cytoplasmic side; that stretch reads KESGVKQ. A helical transmembrane segment spans residues 39-59; that stretch reads GIGYGMLLLFVAAYRQLFCSV. Topologically, residues 60 to 71 are extracellular; that stretch reads GKASFTYWLIVQ. A helical transmembrane segment spans residues 72 to 92; that stretch reads MAVILMYSVFYNITYIYLGFF. Residues 93–109 are Cytoplasmic-facing; sequence PANFVGYYKEKTNFNRA. The chain crosses the membrane as a helical span at residues 110-130; it reads FCALIFILLFPCLYQFIANSV. Topologically, residues 131–135 are extracellular; sequence SLREL. Residues 136–156 form a helical membrane-spanning segment; that stretch reads FSVLPFLVIMLISPFGIRSMF. Residues 157–371 are Cytoplasmic-facing; sequence RRIELEAKLA…LTIPLIKKAE (215 aa). The 182-residue stretch at 187 to 368 folds into the Histidine kinase domain; the sequence is DLHDTLGHTL…VVALTIPLIK (182 aa). His-189 is subject to Phosphohistidine; by autocatalysis.

The protein localises to the cell membrane. The catalysed reaction is ATP + protein L-histidine = ADP + protein N-phospho-L-histidine.. In terms of biological role, member of the two-component regulatory system YvfT/YvfU. Probably activates YvfU by phosphorylation. This is Sensor histidine kinase YvfT (yvfT) from Bacillus subtilis (strain 168).